The chain runs to 1528 residues: 5'-3' exoribonuclease 1 (1528 aa).

Disordered regions lie at residues S1246–E1331, P1431–D1455, and L1470–T1528. Residues Q1274–D1304 are compositionally biased toward basic and acidic residues. Residues A1317–A1326 show a composition bias toward basic residues. Positions S1500–A1517 are enriched in polar residues. The residue at position 1506 (T1506) is a Phosphothreonine. Residue S1510 is modified to Phosphoserine. The segment covering A1518–T1528 has biased composition (basic and acidic residues).

The protein belongs to the 5'-3' exonuclease family. Requires Mg(2+) as cofactor.

Its subcellular location is the cytoplasm. The protein localises to the perinuclear region. It localises to the P-body. 3'-phosphoadenosine 5'-phosphate (pAp) is an inhibitor of KEM1. Sodium-induced GCN4 expression reduces pAp accumulation by activating HAL2 expression, and therefore maintains mRNA degradation capacity which is likely to be important for the accurate and rapid adaptation of gene expression to salt stress. Functionally, multifunctional protein that exhibits several independent functions at different levels of the cellular processes. 5'-3' exonuclease component of the nonsense-mediated mRNA decay (NMD) which is a highly conserved mRNA degradation pathway, an RNA surveillance system whose role is to identify and rid cells of mRNA with premature termination codons and thus prevents accumulation of potentially harmful truncated proteins. The NMD pathway has a second role regulating the decay of wild-type mRNAs, and especially mRNAs that are important for telomere functions. Participate in CTH2-mediated and VTS1-mediated mRNA turnover. Involved in the degradation of several hypomodified mature tRNA species and participates in the 5'-processing or the degradation of the snoRNA precursors and rRNA processing. Involved in defense against virus and suppresses viral RNA recombination by rapidly removing the 5'-truncated RNAs, the substrates of recombination, and thus reducing the chance for recombination to occur in the parental strain. Required for the assembly of the virus-like particles of the Ty3 retrotransposon and contributes to the efficient generation of narnavirus 20S RNA by playing a major role in the elimination of the non-viral upstream sequences from the primary transcripts. Degrades single-stranded DNA (ss-DNA) and can renature complementary ss-DNA as well as catalyzes the formation of heteroduplex DNA from circular ss-DNA and homologous linear ds-DNA in vitro. Acts as a microtubule-associated protein which interacts with cytoplasmic microtubules through beta-tubulin and promotes in vitro assembly of tubulin into microtubules. Associates with microtubule functions such as chromosome transmission, nuclear migration, and SPB duplication. Has also a role in G1 to S transition and is involved in nuclear fusion during karyogamy. Required for the expression of ROK1 at the post-transcriptional level and for the alpha-factor induction of the karyogamy genes KAR3 and KAR4. Plays a role in filamentous growth. This chain is 5'-3' exoribonuclease 1 (XRN1), found in Saccharomyces cerevisiae (strain ATCC 204508 / S288c) (Baker's yeast).